We begin with the raw amino-acid sequence, 239 residues long: Adenylate kinase 2 (239 aa).

29 to 34 contributes to the ATP binding site; sequence GSGKGT. Positions 49-78 are NMP; it reads STGDILRAIIASGSELGQKVQKITESGGLV. Residues Thr50, Arg55, 76-78, 104-107, and Gln111 contribute to the AMP site; these read GLV and GFPR. An LID region spans residues 145–182; it reads GRLFHLASGRSYHELFNPPKVPMVDDITGDRLVHRSDD. ATP contacts are provided by residues Arg146 and 155 to 156; that span reads SY. AMP is bound by residues Arg179 and Arg190.

Belongs to the adenylate kinase family. AK2 subfamily. Monomer. Mg(2+) is required as a cofactor.

It is found in the cytoplasm. Its subcellular location is the cytosol. It carries out the reaction AMP + ATP = 2 ADP. It participates in purine metabolism; purine nucleotide biosynthesis. Its function is as follows. Catalyzes the reversible transfer of the terminal phosphate group between ATP and AMP. Plays an important role in cellular energy homeostasis and in adenine nucleotide metabolism. This Schistosoma mansoni (Blood fluke) protein is Adenylate kinase 2.